Here is a 222-residue protein sequence, read N- to C-terminus: Formimidoylglutamase (222 aa).

Mn(2+)-binding residues include His34, Asp59, His61, Asp63, Asp150, and Asp152.

It belongs to the arginase family. It depends on Mn(2+) as a cofactor.

It catalyses the reaction N-formimidoyl-L-glutamate + H2O = formamide + L-glutamate. The protein operates within amino-acid degradation; L-histidine degradation into L-glutamate; L-glutamate from N-formimidoyl-L-glutamate (hydrolase route): step 1/1. In terms of biological role, catalyzes the conversion of N-formimidoyl-L-glutamate to L-glutamate and formamide. This chain is Formimidoylglutamase (hutG), found in Klebsiella aerogenes (Enterobacter aerogenes).